The primary structure comprises 142 residues: MAKRITRIAKLEFMAMQAKPGAELASLGINMPEFTKQFNDATKDRAGDVVPVVITAYDDKSFDFILKTTPAAILLKKAAGIEKGASNAKTQTVATISADKVREIAEYKLVDLNANDVEAAMKIIAGTAKNMGIKITGMEETN.

This sequence belongs to the universal ribosomal protein uL11 family. As to quaternary structure, part of the ribosomal stalk of the 50S ribosomal subunit. Interacts with L10 and the large rRNA to form the base of the stalk. L10 forms an elongated spine to which L12 dimers bind in a sequential fashion forming a multimeric L10(L12)X complex. Post-translationally, one or more lysine residues are methylated.

In terms of biological role, forms part of the ribosomal stalk which helps the ribosome interact with GTP-bound translation factors. This is Large ribosomal subunit protein uL11 from Mesoplasma florum (strain ATCC 33453 / NBRC 100688 / NCTC 11704 / L1) (Acholeplasma florum).